A 330-amino-acid polypeptide reads, in one-letter code: 4-hydroxythreonine-4-phosphate dehydrogenase (330 aa).

2 residues coordinate substrate: His135 and Thr136. A divalent metal cation is bound by residues His165, His210, and His266. Residues Lys274, Asn283, and Arg292 each coordinate substrate.

Belongs to the PdxA family. As to quaternary structure, homodimer. The cofactor is Zn(2+). Mg(2+) is required as a cofactor. Requires Co(2+) as cofactor.

It is found in the cytoplasm. It catalyses the reaction 4-(phosphooxy)-L-threonine + NAD(+) = 3-amino-2-oxopropyl phosphate + CO2 + NADH. It functions in the pathway cofactor biosynthesis; pyridoxine 5'-phosphate biosynthesis; pyridoxine 5'-phosphate from D-erythrose 4-phosphate: step 4/5. Catalyzes the NAD(P)-dependent oxidation of 4-(phosphooxy)-L-threonine (HTP) into 2-amino-3-oxo-4-(phosphooxy)butyric acid which spontaneously decarboxylates to form 3-amino-2-oxopropyl phosphate (AHAP). This Vibrio cholerae serotype O1 (strain ATCC 39315 / El Tor Inaba N16961) protein is 4-hydroxythreonine-4-phosphate dehydrogenase.